We begin with the raw amino-acid sequence, 144 residues long: Single-stranded DNA-binding protein 3 (144 aa).

Residues 1–103 form the SSB domain; it reads MNKVVLIGRL…IVAEEVQFLE (103 aa). Over residues 112-134 the composition is skewed to polar residues; sequence MANDQFNNGNENGSMQLPDNNDI. The segment at 112 to 144 is disordered; sequence MANDQFNNGNENGSMQLPDNNDITPIDDGDIPF.

As to quaternary structure, homotetramer.

The protein is Single-stranded DNA-binding protein 3 (ssb3) of Clostridium acetobutylicum (strain ATCC 824 / DSM 792 / JCM 1419 / IAM 19013 / LMG 5710 / NBRC 13948 / NRRL B-527 / VKM B-1787 / 2291 / W).